The chain runs to 292 residues: MASITTTTNFFESIPRPTKTYRSASYDRISTRHGFNGTGKTVLITGGSSGIGLSIAKAFAGAGVARIAILSRSRATQLTAKAEIEAAYPSTSILLFEASVTDADRFASVLEELAGVHVLVLCAAAVHARVPLAELSGKDVQHVFDTNSVSTVNLARLYTATPGKDKTILHVSSAVAQMYAPLRSVYGASKAAAVQAMQHLAREHQGTGDRVRVFSFHPGAITTPASGAIYTPGAVQWDDADLPAHFSLWLAGPESDFLNGRYVWANWDVDELVALKERLACDGRFLTIGLVL.

2 residues coordinate NADP(+): I44 and R156. Catalysis depends on proton donor residues S172 and Y186. NADP(+)-binding residues include Y186, K190, I221, and T223. The Lowers pKa of active site Tyr role is filled by K190.

The protein belongs to the short-chain dehydrogenases/reductases (SDR) family.

It functions in the pathway secondary metabolite biosynthesis. Functionally, short chain dehydrogenase/reductase; part of the ergochrome gene cluster responsible for the typical purple-black color of the ergot sclerotia. The ergochrome gene cluster produces several ergot pigments including the yellow ergochrome secalonic acid and its derivatives, as well as the red anthraquinones endocrocin and clavorubin. The pathway begins with the synthesis of atrochrysone thioester by the polyketide synthase (PKS) CPUR_05437. The atrochrysone carboxyl ACP thioesterase CPUR_05436 then breaks the thioester bond and releases the atrochrysone carboxylic acid from CPUR_05437. The atrochrysone carboxylic acid is then converted to atrochrysone which is further transformed into emodin anthrone. The next step is performed by the anthrone oxygenase CPUR_05434 that catalyzes the oxidation of emodinanthrone to emodin. Emodin is further modified to yield monodictyphenone via several steps involving CPUR_05427, CPUR_05428, CPUR_05429 and CPUR_05430. The short chain dehydrogenase/reductase CPUR_05418 then catalyzes the C-5 ketoreduction to give the xanthone skeleton of the monomeric units. Ergochromes formation requires further dimerization steps of different xanthone units, probably catalyzed by the cytochrome P450 monooxygenase CPUR_05419. CPUR_05425, CPUR_05426 and CPUR_05431 are unique to Claviceps, thus it is likely that they are involved in further modification of xanthone units or in their dimerization. The yellow ergochromes and the red anthraquinone pigments endocrocin and clavorubin are products from the same PKS derived precursors and the latter are likely shunt products in the pathway of xanthone biosynthesis. It is proposed that atrochrysone carboxylic acid released from the PKS CPUR_05437 can also be converted to endocrocin anthrone which is further oxidized into endocrocin by CPUR_05435. Endocrocin could be then modified to clavorubin, possibly by CPUR_05423 and CPUR_05431. Clavorubin is the principal anthraquinone metabolite produced by the cluster with a much higher yield compared to endocrocin. The protein is Short chain dehydrogenase/reductase CPUR_05418 of Claviceps purpurea (strain 20.1) (Ergot fungus).